The primary structure comprises 196 residues: DNA polymerase epsilon subunit D (196 aa).

Residues 125-196 (RKKEKLDSGE…ETRVQNLEQT (72 aa)) are disordered. The segment covering 133 to 143 (GEVDADGDIDM) has biased composition (acidic residues). Residues 144 to 159 (GEDKENVPVEKVKEHD) show a composition bias toward basic and acidic residues. Residues 160–173 (EIEEQGDALQDVEE) show a composition bias toward acidic residues. The segment covering 174 to 188 (SSEKKQKTESQDVET) has biased composition (basic and acidic residues). Serine 183 is subject to Phosphoserine; by ATM or ATR.

DNA polymerase epsilon is a heterotetramer consisting of POL2, DPB2, DPB3 and DPB4. Component of the ISW2 complex, which at least consists of ISW2, ITC1, DLS1 and DPB4.

The protein resides in the nucleus. In terms of biological role, as accessory component of the DNA polymerase epsilon (DNA polymerase II) participates in chromosomal DNA replication. It is required during synthesis of the leading and lagging DNA strands at the replication fork and binds at/or near replication origins and moves along DNA with the replication fork. It has 3'-5' proofreading exonuclease activity that correct errors arising during DNA replication. It is also involved in DNA synthesis during DNA repair. Also functions as a component of the ISW2 complex, which acts in remodeling the chromatin by catalyzing an ATP-dependent alteration in the structure of nucleosomal DNA. The ISW2 complex is involved in coordinating transcriptional repression and in inheritance of telomeric silencing. It is involved in repression of MAT a-specific genes, INO1, and early meiotic genes during mitotic growth dependent upon transcription factor UME6 and in a parallel pathway to the RPD3-SIN3 histone deacetylase complex. This is DNA polymerase epsilon subunit D (DPB4) from Saccharomyces cerevisiae (strain ATCC 204508 / S288c) (Baker's yeast).